Consider the following 342-residue polypeptide: MNTADFDFHLPEELIAQTPLEKRDASKLLIVNRETGEMQDKHFHSIIDMLEPGDALVMNDTRVLPARLYGQKVETGGHVELLLLKNTSGDEWEVLAKPAKRLKVGTRISFGDGRLSAVVTEELTHGGRIVRFEYQGIFLEVLESLGEMPLPPYIHEKLDDRERYQTVYAKESGSAAAPTAGLHFTKELLAEIQAKGVHLVYLTLHVGLGTFRPVSVDNLDEHEMHSEFYQLSEEAAATLRSVKKNGGRVIAVGTTSIRTLETIGSKFDGQIQADSGWTNIFIKPGYEWKVVDAFSTNFHLPKSTLVMLVSAFAGRELVLDAYHHSIQEHYRFFSFGDAMFIY.

Belongs to the QueA family. In terms of assembly, monomer.

It is found in the cytoplasm. It catalyses the reaction 7-aminomethyl-7-carbaguanosine(34) in tRNA + S-adenosyl-L-methionine = epoxyqueuosine(34) in tRNA + adenine + L-methionine + 2 H(+). The protein operates within tRNA modification; tRNA-queuosine biosynthesis. Transfers and isomerizes the ribose moiety from AdoMet to the 7-aminomethyl group of 7-deazaguanine (preQ1-tRNA) to give epoxyqueuosine (oQ-tRNA). The polypeptide is S-adenosylmethionine:tRNA ribosyltransferase-isomerase (Streptococcus pneumoniae serotype 4 (strain ATCC BAA-334 / TIGR4)).